An 87-amino-acid chain; its full sequence is Small ribosomal subunit protein uS19 (87 aa).

It belongs to the universal ribosomal protein uS19 family.

Functionally, protein S19 forms a complex with S13 that binds strongly to the 16S ribosomal RNA. The sequence is that of Small ribosomal subunit protein uS19 (rpsS) from Mycoplasma pneumoniae (strain ATCC 29342 / M129 / Subtype 1) (Mycoplasmoides pneumoniae).